The sequence spans 836 residues: Sucrose synthase 5 (836 aa).

Residues 270-748 form a GT-B glycosyltransferase region; the sequence is RIFNVVIFSV…GLQRINECYT (479 aa). Residues 805-836 form a disordered region; sequence PPPLPPKPLVKPSASKGSKRTQPRLSFRLFGA.

The protein belongs to the glycosyltransferase 1 family. Plant sucrose synthase subfamily. As to expression, detected in the whole plant but more precisely confined to the vasculature in cotyledons, leaves, petals, anthers and roots. Also detected in developing siliques, young immature rosette and cauline leaves.

It localises to the secreted. The protein localises to the cell wall. The catalysed reaction is an NDP-alpha-D-glucose + D-fructose = a ribonucleoside 5'-diphosphate + sucrose + H(+). Its function is as follows. Sucrose-cleaving enzyme that provides UDP-glucose and fructose for various metabolic pathways. Functions in callose synthesis at the site of phloem sieve elements. The sequence is that of Sucrose synthase 5 (SUS5) from Arabidopsis thaliana (Mouse-ear cress).